Here is a 434-residue protein sequence, read N- to C-terminus: Adenylosuccinate synthetase (434 aa).

Residues 25-31 (GDEGKGK) and 53-55 (GHT) each bind GTP. Asp26 serves as the catalytic Proton acceptor. Asp26 and Gly53 together coordinate Mg(2+). Residues 26–29 (DEGK), 51–54 (NAGH), Thr142, Arg156, Asn233, Thr248, and Arg312 each bind IMP. His54 acts as the Proton donor in catalysis. 308–314 (VTTGRKR) is a substrate binding site. GTP-binding positions include Arg314, 340–342 (KLD), and 422–424 (GVG).

It belongs to the adenylosuccinate synthetase family. In terms of assembly, homodimer. It depends on Mg(2+) as a cofactor.

Its subcellular location is the cytoplasm. It carries out the reaction IMP + L-aspartate + GTP = N(6)-(1,2-dicarboxyethyl)-AMP + GDP + phosphate + 2 H(+). It functions in the pathway purine metabolism; AMP biosynthesis via de novo pathway; AMP from IMP: step 1/2. Its activity is regulated as follows. Competitively Inhibited by GMP. Allosterically inhibited by AMP. Its function is as follows. Plays an important role in the de novo pathway and in the salvage pathway of purine nucleotide biosynthesis. Catalyzes the first committed step in the biosynthesis of AMP from IMP. This Schizosaccharomyces pombe (strain 972 / ATCC 24843) (Fission yeast) protein is Adenylosuccinate synthetase (ade2).